The primary structure comprises 325 residues: Tetraacyldisaccharide 4'-kinase (325 aa).

Residue 55–62 coordinates ATP; that stretch reads TAGGNGKT.

This sequence belongs to the LpxK family.

The enzyme catalyses a lipid A disaccharide + ATP = a lipid IVA + ADP + H(+). The protein operates within glycolipid biosynthesis; lipid IV(A) biosynthesis; lipid IV(A) from (3R)-3-hydroxytetradecanoyl-[acyl-carrier-protein] and UDP-N-acetyl-alpha-D-glucosamine: step 6/6. Functionally, transfers the gamma-phosphate of ATP to the 4'-position of a tetraacyldisaccharide 1-phosphate intermediate (termed DS-1-P) to form tetraacyldisaccharide 1,4'-bis-phosphate (lipid IVA). This is Tetraacyldisaccharide 4'-kinase from Salmonella newport (strain SL254).